Consider the following 266-residue polypeptide: Glutathione S-transferase AN1595 (266 aa).

A GST N-terminal domain is found at 43-123 (SFGKLYTYKR…HVTNEDSTTT (81 aa)). Glutathione contacts are provided by K93, E107, C108, and N143. K93 contacts substrate. Residues 128 to 259 (SSLDFVQIIR…VEEGLPNAPP (132 aa)) enclose the GST C-terminal domain.

It belongs to the GST superfamily.

The protein operates within secondary metabolite biosynthesis; terpenoid biosynthesis. Functionally, glutathione S-transferase; part of the gene cluster that mediates the biosynthesis of the diterpene ent-pimara-8(14),15-diene (PD). Within the cluster, the HMG-CoA reductase AN1593 functions in the mevalonate pathway, which produces isoprenoid precursors. The geranylgeranyl pyrophosphate (GGPP) synthase AN1592 is needed in the formation of GGPP, the precursor for diterpenes. Lastly, the pimaradiene synthase pbcA performs the 2 cyclization steps that convert GGPP to ent-pimara-8(14),15-diene. The putative roles of the remaining cluster enzymes in ent-pimara-8(14),15-diene biosynthesis is unclear. The cytochrome P450 monooxygenase AN1598, the glutathione S-transferase AN1595, the oxidoreductases AN1596 and AN1597 probably function as decorative enzymes. It is possible that in biological conditions the compound is oxidized to ent-pimara-8(14),15-dien-19-oic acid, which is a bioactive diterpene compound predominant in many plant extracts. This is Glutathione S-transferase AN1595 from Emericella nidulans (strain FGSC A4 / ATCC 38163 / CBS 112.46 / NRRL 194 / M139) (Aspergillus nidulans).